The primary structure comprises 206 residues: Urease accessory protein UreE (206 aa).

Positions 136 to 206 are disordered; sequence PEGGAYAEPS…HGHAHAHDRK (71 aa). Basic and acidic residues-rich tracts occupy residues 148–169 and 177–191; these read QGHD…GGHE and HGHA…EHCG. Residues 192–206 are compositionally biased toward basic residues; that stretch reads HGHHHHGHAHAHDRK.

The protein belongs to the UreE family.

It localises to the cytoplasm. Its function is as follows. Involved in urease metallocenter assembly. Binds nickel. Probably functions as a nickel donor during metallocenter assembly. This is Urease accessory protein UreE from Bradyrhizobium sp. (strain BTAi1 / ATCC BAA-1182).